The following is a 138-amino-acid chain: Thyrotropin subunit beta (138 aa).

An N-terminal signal peptide occupies residues 1 to 20; it reads MTATFLMSLLFGLAFGQTMS. 6 disulfide bridges follow: cysteine 22–cysteine 72, cysteine 36–cysteine 87, cysteine 39–cysteine 125, cysteine 47–cysteine 103, cysteine 51–cysteine 105, and cysteine 108–cysteine 115. N-linked (GlcNAc...) asparagine glycosylation occurs at asparagine 43. A propeptide spanning residues 133–138 is cleaved from the precursor; the sequence is LVGFPV.

Belongs to the glycoprotein hormones subunit beta family. In terms of assembly, heterodimer of a common alpha chain and a unique beta chain which confers biological specificity to thyrotropin, lutropin, follitropin and gonadotropin.

The protein resides in the secreted. In terms of biological role, indispensable for the control of thyroid structure and metabolism. The protein is Thyrotropin subunit beta (TSHB) of Monodelphis domestica (Gray short-tailed opossum).